The following is a 329-amino-acid chain: Ankyrin repeat and SOCS box protein 5 (329 aa).

ANK repeat units follow at residues 69–98 (ADRSPLHEAASQGRLLALRTLLSQGYNVNA), 102–131 (DHITPLHEACLGDHVACARTLLEAGANVNA), 135–164 (DGVTPLFNACSQGSTSCTELLLEYGAKAQL), 167–196 (CLPSPTHEAASKGHHEFLDLLISWGIDVDQ), 200–229 (HLGTPLYVACMSQQFHCIWKLLYAGADVQK), and 232–261 (YWDTPLHAAAQQSSTEIVNLLIEFGADINA). The 52-residue stretch at 278 to 329 (MVERILLQHEATPSSLCQLCRLCIRNYIGRPRLHLIPQLQLPTLLQNFLQYR) folds into the SOCS box domain.

The protein belongs to the ankyrin SOCS box (ASB) family. Expressed in endothelial and smooth muscle cells of collateral arteries as well as in satellite cells.

It participates in protein modification; protein ubiquitination. May be a substrate-recognition component of a SCF-like ECS (Elongin-Cullin-SOCS-box protein) E3 ubiquitin-protein ligase complex which mediates the ubiquitination and subsequent proteasomal degradation of target proteins. May play a role in the initiation of arteriogenesis. The protein is Ankyrin repeat and SOCS box protein 5 (ASB5) of Oryctolagus cuniculus (Rabbit).